The following is a 124-amino-acid chain: Large ribosomal subunit protein bL12 (124 aa).

It belongs to the bacterial ribosomal protein bL12 family. In terms of assembly, homodimer. Part of the ribosomal stalk of the 50S ribosomal subunit. Forms a multimeric L10(L12)X complex, where L10 forms an elongated spine to which 2 to 4 L12 dimers bind in a sequential fashion. Binds GTP-bound translation factors.

Its function is as follows. Forms part of the ribosomal stalk which helps the ribosome interact with GTP-bound translation factors. Is thus essential for accurate translation. The sequence is that of Large ribosomal subunit protein bL12 from Borreliella burgdorferi (strain ZS7) (Borrelia burgdorferi).